The sequence spans 628 residues: MAQRIPQEVIEEVRHRTNIVDIIGQYVQLKKSGKNYMGLCPFHEERSPSFSVAEDKQIFHCFGCGKGGTVFNFLQEIEGISFPESVKRVADLEHLSVDFDWSEPREVADTPENQQRRSLLQLHSKAAELYHHILVNTKIGEPALNYLLERGLTQELIETFQIGFAPQKRDFLSQVFKNEQLDETLFEPSGLFVQRDNGTFLDRFYQRIMFPINDPQGNVIAFSGRLLKTADFPGDEMPKYLNSPETTLFNKRETLFNFDRARKEIRKENTVLLFEGFMDVIAAWQSGVKSGVASMGTSLTNEQIRRLERVAKEVVICYDGDNAGVQATNRAIQLLQENSHFDLSIVSIPEKLDPDEYVRKYGAEAFQNLANHGRETVFSFKMNYHRLTRNMNNEKEQLDYVNELLRELTNVQSPLERDRYLNQIAQEFQLSVHSLEEQFNQLKQEQRSVQRQERQQFYQDEMMPPPMEEPVFEENHVQNKLPLTQVQKAERSLLFRLMNEQGVRQTIQQLPDFSFAHDEYQELYFLLESYATLHQSFDIADFINFLQDNQTKQLAIEIAYQNLSEESSEREVADLLHVIALSSIAEAIEQKKIQQQEAKRVGNQQLEAELTMEIIQLARQLKAQRTFT.

A CHC2-type zinc finger spans residues 40–64; the sequence is CPFHEERSPSFSVAEDKQIFHCFGC. The 83-residue stretch at 269 to 351 folds into the Toprim domain; sequence NTVLLFEGFM…DLSIVSIPEK (83 aa). The Mg(2+) site is built by glutamate 275, aspartate 319, and aspartate 321.

Belongs to the DnaG primase family. As to quaternary structure, monomer. Interacts with DnaB. It depends on Zn(2+) as a cofactor. The cofactor is Mg(2+).

The catalysed reaction is ssDNA + n NTP = ssDNA/pppN(pN)n-1 hybrid + (n-1) diphosphate.. RNA polymerase that catalyzes the synthesis of short RNA molecules used as primers for DNA polymerase during DNA replication. The protein is DNA primase of Enterococcus faecalis (strain ATCC 700802 / V583).